A 978-amino-acid polypeptide reads, in one-letter code: Peroxisomal ATPase PEX6 (978 aa).

R119 carries the omega-N-methylarginine modification. ATP contacts are provided by residues 470 to 477 (GPPGSGKT) and 742 to 749 (GPPGTGKT).

This sequence belongs to the AAA ATPase family. In terms of assembly, interacts with PEX1; forming the PEX1-PEX6 AAA ATPase complex, which is composed of a heterohexamer formed by a trimer of PEX1-PEX6 dimers. Interacts with PEX26; interaction is direct and promotes recruitment to peroxisomal membranes. Interacts with ZFAND6.

It localises to the cytoplasm. The protein localises to the cytosol. Its subcellular location is the peroxisome membrane. It is found in the cell projection. The protein resides in the cilium. It localises to the photoreceptor outer segment. It carries out the reaction ATP + H2O = ADP + phosphate + H(+). Its function is as follows. Component of the PEX1-PEX6 AAA ATPase complex, a protein dislocase complex that mediates the ATP-dependent extraction of the PEX5 receptor from peroxisomal membranes, an essential step for PEX5 recycling. Specifically recognizes PEX5 monoubiquitinated at 'Cys-11', and pulls it out of the peroxisome lumen through the PEX2-PEX10-PEX12 retrotranslocation channel. Extraction by the PEX1-PEX6 AAA ATPase complex is accompanied by unfolding of the TPR repeats and release of bound cargo from PEX5. In Rattus norvegicus (Rat), this protein is Peroxisomal ATPase PEX6.